The sequence spans 297 residues: Probable endonuclease 4 (297 aa).

Zn(2+) is bound by residues H69, H110, E145, D179, H182, H214, D227, H229, and E259.

It belongs to the AP endonuclease 2 family. Zn(2+) serves as cofactor.

It carries out the reaction Endonucleolytic cleavage to 5'-phosphooligonucleotide end-products.. In terms of biological role, endonuclease IV plays a role in DNA repair. It cleaves phosphodiester bonds at apurinic or apyrimidinic (AP) sites, generating a 3'-hydroxyl group and a 5'-terminal sugar phosphate. This is Probable endonuclease 4 from Listeria monocytogenes serovar 1/2a (strain ATCC BAA-679 / EGD-e).